Consider the following 55-residue polypeptide: Photosystem II reaction center X protein (55 aa).

Residues Ile-24–Trp-44 traverse the membrane as a helical segment.

This sequence belongs to the PsbX family. Type 2 subfamily. As to quaternary structure, PSII consists of a core antenna complex that captures photons, and an electron transfer chain that converts photonic excitation into a charge separation. PSII forms dimeric complexes.

It is found in the cellular thylakoid membrane. Its function is as follows. Involved in the binding and/or turnover of quinones at the Q(B) site of Photosystem II. This Prochlorococcus marinus (strain SARG / CCMP1375 / SS120) protein is Photosystem II reaction center X protein.